Here is a 331-residue protein sequence, read N- to C-terminus: Glyceraldehyde-3-phosphate dehydrogenase (331 aa).

NAD(+)-binding positions include 12 to 13, D34, R78, and T120; that span reads RI. K132 and K138 each carry N6-acetyllysine. Residues 149-151 and T180 contribute to the D-glyceraldehyde 3-phosphate site; that span reads SCT. C150 (nucleophile) is an active-site residue. K192 carries the post-translational modification N6-acetyllysine. Residues 209–210 and R232 each bind D-glyceraldehyde 3-phosphate; that span reads TG. Position 249 is an N6-acetyllysine (K249). N314 provides a ligand contact to NAD(+).

This sequence belongs to the glyceraldehyde-3-phosphate dehydrogenase family. Homotetramer.

Its subcellular location is the cytoplasm. It catalyses the reaction D-glyceraldehyde 3-phosphate + phosphate + NAD(+) = (2R)-3-phospho-glyceroyl phosphate + NADH + H(+). Its pathway is carbohydrate degradation; glycolysis; pyruvate from D-glyceraldehyde 3-phosphate: step 1/5. Catalyzes the oxidative phosphorylation of glyceraldehyde 3-phosphate (G3P) to 1,3-bisphosphoglycerate (BPG) using the cofactor NAD. The first reaction step involves the formation of a hemiacetal intermediate between G3P and a cysteine residue, and this hemiacetal intermediate is then oxidized to a thioester, with concomitant reduction of NAD to NADH. The reduced NADH is then exchanged with the second NAD, and the thioester is attacked by a nucleophilic inorganic phosphate to produce BPG. The protein is Glyceraldehyde-3-phosphate dehydrogenase (gapA) of Escherichia coli O6:H1 (strain CFT073 / ATCC 700928 / UPEC).